The primary structure comprises 572 residues: Beta-fructofuranosidase, insoluble isoenzyme CWINV5 (572 aa).

The signal sequence occupies residues 1 to 23 (MANIVWCNIAMFLLVSLFLTDDA). Residues 54 to 57 (WMND) and Q73 each bind substrate. Residue D57 is part of the active site. An N-linked (GlcNAc...) asparagine glycan is attached at N84. A substrate-binding site is contributed by 118–119 (WS). N-linked (GlcNAc...) asparagine glycans are attached at residues N152 and N179. Residues 184–185 (RD) and E239 contribute to the substrate site. 2 N-linked (GlcNAc...) asparagine glycosylation sites follow: N333 and N438. Cysteines 434 and 481 form a disulfide.

The protein belongs to the glycosyl hydrolase 32 family. In terms of tissue distribution, expressed in flowers, and, to a lower extent, in leaves.

It localises to the secreted. The protein resides in the extracellular space. The protein localises to the apoplast. Its subcellular location is the cell wall. It catalyses the reaction Hydrolysis of terminal non-reducing beta-D-fructofuranoside residues in beta-D-fructofuranosides.. This chain is Beta-fructofuranosidase, insoluble isoenzyme CWINV5 (CWINV5), found in Arabidopsis thaliana (Mouse-ear cress).